A 69-amino-acid polypeptide reads, in one-letter code: Putative membrane protein insertion efficiency factor (69 aa).

The protein belongs to the UPF0161 family.

It localises to the cell inner membrane. Functionally, could be involved in insertion of integral membrane proteins into the membrane. The chain is Putative membrane protein insertion efficiency factor from Azoarcus sp. (strain BH72).